Reading from the N-terminus, the 335-residue chain is Ornithine carbamoyltransferase (335 aa).

Residues 56-59 (STRT), Q83, R107, and 134-137 (HPTQ) contribute to the carbamoyl phosphate site. Residues N168, D232, and 236 to 237 (SM) contribute to the L-ornithine site. Carbamoyl phosphate contacts are provided by residues 274–275 (CL) and R320.

The protein belongs to the aspartate/ornithine carbamoyltransferase superfamily. OTCase family.

The protein localises to the cytoplasm. The enzyme catalyses carbamoyl phosphate + L-ornithine = L-citrulline + phosphate + H(+). It participates in amino-acid biosynthesis; L-arginine biosynthesis; L-arginine from L-ornithine and carbamoyl phosphate: step 1/3. Its function is as follows. Reversibly catalyzes the transfer of the carbamoyl group from carbamoyl phosphate (CP) to the N(epsilon) atom of ornithine (ORN) to produce L-citrulline. The protein is Ornithine carbamoyltransferase of Yersinia pestis bv. Antiqua (strain Nepal516).